A 445-amino-acid polypeptide reads, in one-letter code: tRNA-2-methylthio-N(6)-dimethylallyladenosine synthase (445 aa).

In terms of domain architecture, MTTase N-terminal spans 3 to 124; sequence KKLYIKTYGC…LPELISKVVR (122 aa). C12, C48, C87, C162, C166, and C169 together coordinate [4Fe-4S] cluster. The Radical SAM core domain occupies 148-380; sequence YPQGTSAFIS…QQELMAQQLA (233 aa). Residues 383-445 enclose the TRAM domain; it reads TSCVGSTMKV…SLNSLTGEIL (63 aa).

This sequence belongs to the methylthiotransferase family. MiaB subfamily. In terms of assembly, monomer. [4Fe-4S] cluster serves as cofactor.

It is found in the cytoplasm. It catalyses the reaction N(6)-dimethylallyladenosine(37) in tRNA + (sulfur carrier)-SH + AH2 + 2 S-adenosyl-L-methionine = 2-methylsulfanyl-N(6)-dimethylallyladenosine(37) in tRNA + (sulfur carrier)-H + 5'-deoxyadenosine + L-methionine + A + S-adenosyl-L-homocysteine + 2 H(+). Its function is as follows. Catalyzes the methylthiolation of N6-(dimethylallyl)adenosine (i(6)A), leading to the formation of 2-methylthio-N6-(dimethylallyl)adenosine (ms(2)i(6)A) at position 37 in tRNAs that read codons beginning with uridine. The protein is tRNA-2-methylthio-N(6)-dimethylallyladenosine synthase of Rickettsia conorii (strain ATCC VR-613 / Malish 7).